Here is a 56-residue protein sequence, read N- to C-terminus: uncharacterized protein (56 aa).

A run of 2 helical transmembrane segments spans residues 5–23 (VLIFLIGYLPFFLAAYWIY) and 33–55 (ITAGAILSFDAAMLAIFGGILGW).

It is found in the cell membrane. This is an uncharacterized protein from Archaeoglobus fulgidus (strain ATCC 49558 / DSM 4304 / JCM 9628 / NBRC 100126 / VC-16).